The primary structure comprises 243 residues: Proteasome subunit beta (243 aa).

The interval 1–46 (MFNPNNGSEFARNRARLDDTPNPYEPEVGSLPEGDRSQAGSDTVNK) is disordered. Positions 1 to 48 (MFNPNNGSEFARNRARLDDTPNPYEPEVGSLPEGDRSQAGSDTVNKTG) are cleaved as a propeptide — removed in mature form; by autocatalysis. Catalysis depends on T49, which acts as the Nucleophile.

It belongs to the peptidase T1B family. In terms of assembly, the 20S proteasome core is composed of 14 alpha and 14 beta subunits that assemble into four stacked heptameric rings, resulting in a barrel-shaped structure. The two inner rings, each composed of seven catalytic beta subunits, are sandwiched by two outer rings, each composed of seven alpha subunits. The catalytic chamber with the active sites is on the inside of the barrel. Has a gated structure, the ends of the cylinder being occluded by the N-termini of the alpha-subunits. Is capped at one or both ends by the proteasome regulatory ATPase, PAN.

The protein resides in the cytoplasm. The catalysed reaction is Cleavage of peptide bonds with very broad specificity.. With respect to regulation, the formation of the proteasomal ATPase PAN-20S proteasome complex, via the docking of the C-termini of PAN into the intersubunit pockets in the alpha-rings, triggers opening of the gate for substrate entry. Interconversion between the open-gate and close-gate conformations leads to a dynamic regulation of the 20S proteasome proteolysis activity. In terms of biological role, component of the proteasome core, a large protease complex with broad specificity involved in protein degradation. The polypeptide is Proteasome subunit beta (Halobacterium salinarum (strain ATCC 29341 / DSM 671 / R1)).